A 157-amino-acid chain; its full sequence is Phosphopantetheine adenylyltransferase (157 aa).

Ser8 provides a ligand contact to substrate. Residues 8-9 (SF) and His16 each bind ATP. Substrate-binding residues include Lys40, Thr72, and Arg86. Residues 87-89 (GLR), Glu97, and 122-128 (YSFLSSS) contribute to the ATP site.

It belongs to the bacterial CoaD family. As to quaternary structure, homohexamer. The cofactor is Mg(2+).

The protein localises to the cytoplasm. The enzyme catalyses (R)-4'-phosphopantetheine + ATP + H(+) = 3'-dephospho-CoA + diphosphate. The protein operates within cofactor biosynthesis; coenzyme A biosynthesis; CoA from (R)-pantothenate: step 4/5. Reversibly transfers an adenylyl group from ATP to 4'-phosphopantetheine, yielding dephospho-CoA (dPCoA) and pyrophosphate. This Crocosphaera subtropica (strain ATCC 51142 / BH68) (Cyanothece sp. (strain ATCC 51142)) protein is Phosphopantetheine adenylyltransferase.